Reading from the N-terminus, the 264-residue chain is Phosphonoacetaldehyde hydrolase (264 aa).

The active-site Nucleophile is D9. Residues D9 and A11 each contribute to the Mg(2+) site. Catalysis depends on K50, which acts as the Schiff-base intermediate with substrate. D183 provides a ligand contact to Mg(2+).

It belongs to the HAD-like hydrolase superfamily. PhnX family. As to quaternary structure, homodimer. It depends on Mg(2+) as a cofactor.

It carries out the reaction phosphonoacetaldehyde + H2O = acetaldehyde + phosphate + H(+). Its function is as follows. Involved in phosphonate degradation. This Bacillus cereus (strain G9842) protein is Phosphonoacetaldehyde hydrolase.